A 269-amino-acid polypeptide reads, in one-letter code: MAVGKNKGVSKGGKKGSKKKVVDPFTRKDWYDVKAPNMFKNRQVGKTLVNRTQGTRIASDGLKGRVFEVSLADLQNEQDAERSFRKFKLIAESVNGRDVLCNFHGMDLTTDKLRSMVKKWQTLIECSVDVKTTDGYLLRVFCIGFTIKDSVSQRKTCYAQHSQIKNIRQRMTTIIKREIINSDLKGVVEKLLPDSIAKDIEKACQVVYPLHDVFIRKVKVLKKPRFDLSSLLELHGDGGGKAAEVSTGAASGVVVDRPEGYEPPVQESV.

2 disordered regions span residues 1-20 (MAVG…SKKK) and 249-269 (AASG…QESV).

It belongs to the eukaryotic ribosomal protein eS1 family. Component of the small ribosomal subunit. Mature ribosomes consist of a small (40S) and a large (60S) subunit. The 40S subunit contains about 33 different proteins and 1 molecule of RNA (18S). The 60S subunit contains about 49 different proteins and 3 molecules of RNA (28S, 5.8S and 5S).

It localises to the cytoplasm. This chain is Small ribosomal subunit protein eS1, found in Anopheles darlingi (Mosquito).